Consider the following 338-residue polypeptide: Ferredoxin--NADP reductase (338 aa).

Residues D36, Q44, Y49, V89, F123, D290, and T331 each contribute to the FAD site.

The protein belongs to the ferredoxin--NADP reductase type 2 family. As to quaternary structure, homodimer. FAD serves as cofactor.

It carries out the reaction 2 reduced [2Fe-2S]-[ferredoxin] + NADP(+) + H(+) = 2 oxidized [2Fe-2S]-[ferredoxin] + NADPH. This Anaplasma phagocytophilum (strain HZ) protein is Ferredoxin--NADP reductase.